Here is a 393-residue protein sequence, read N- to C-terminus: DNA primase small subunit PriS (393 aa).

Catalysis depends on residues aspartate 100, aspartate 102, and aspartate 296.

This sequence belongs to the eukaryotic-type primase small subunit family. Heterodimer of a small subunit (PriS) and a large subunit (PriL). Mg(2+) serves as cofactor. It depends on Mn(2+) as a cofactor.

Its function is as follows. Catalytic subunit of DNA primase, an RNA polymerase that catalyzes the synthesis of short RNA molecules used as primers for DNA polymerase during DNA replication. The small subunit contains the primase catalytic core and has DNA synthesis activity on its own. Binding to the large subunit stabilizes and modulates the activity, increasing the rate of DNA synthesis while decreasing the length of the DNA fragments, and conferring RNA synthesis capability. The DNA polymerase activity may enable DNA primase to also catalyze primer extension after primer synthesis. May also play a role in DNA repair. In Natronomonas pharaonis (strain ATCC 35678 / DSM 2160 / CIP 103997 / JCM 8858 / NBRC 14720 / NCIMB 2260 / Gabara) (Halobacterium pharaonis), this protein is DNA primase small subunit PriS.